The chain runs to 339 residues: MYSLHDFKFPEDWIEPPANDKCIYTCYKEVVDFKLFEENKKTLEYYYGTISSTIYLYPLCNYEQLLVASRYLTVCFVVDDFLESKLTNPDDSRELIKKLEHIFMDGNFYDSNNISNIEKYVLYFRETTKQFVGEKIEFFNQFLKFIIDWINSINPFNRADNLNNYDSYNFFKRTNSGTYVSLSVAMLLYPNSKIDPKIWINPRFDRFATNGGYQMATMNDCASYAKEIRNNNHLTNPLHFLQNQVGSFDNVYKVILKFNDEIMNQICEDERILLLECPIEQRDDLKLLTRSMKLILGGNYLWSLQCSRYVDINSPFIEQRSNDPNVIAYEKIVDKILLK.

A DDxx(x)D/E motif motif is present at residues 79 to 84 (DDFLES). An NDxxSxxxD/E motif motif is present at residues 219–227 (NDCASYAKE).

It belongs to the terpene synthase family.

It catalyses the reaction (2E,6E)-farnesyl diphosphate = (-)-beta-barbatene + diphosphate. The catalysed reaction is (2E,6E)-farnesyl diphosphate = (E)-beta-farnesene + diphosphate. It carries out the reaction (2E)-geranyl diphosphate = (Z)-beta-ocimene + diphosphate. The enzyme catalyses (2E)-geranyl diphosphate + H2O = linalool + diphosphate. It catalyses the reaction (2E)-geranyl diphosphate = beta-myrcene + diphosphate. In terms of biological role, terpene synthase that converts its substrate farnesyl diphosphate (FPP) into the sesquiterpene beta-barbatene as a major product as well as (E)-beta-farnesene as a minor product. Is also able to convert geranyl diphosphate (GPP) into a mixture of monoterpenes including (Z)-beta-ocimene, linalool, beta-myrcene, limonene and alpha-terpineol. This chain is Terpene synthase 9, found in Dictyostelium discoideum (Social amoeba).